A 30-amino-acid chain; its full sequence is Dermaseptin-J10 (30 aa).

In terms of tissue distribution, expressed by the skin glands.

It localises to the secreted. Its function is as follows. Has antimicrobial activity. This is Dermaseptin-J10 from Phasmahyla jandaia (Jandaia leaf frog).